We begin with the raw amino-acid sequence, 557 residues long: Protein Red (557 aa).

Positions 1-90 (MPERDSEPFS…YAKLRQQEIE (90 aa)) are disordered. Residues 16-25 (DGHDVDDPHS) are compositionally biased toward basic and acidic residues. The segment covering 42–53 (TPRAAPTSAPPS) has biased composition (low complexity). N6-acetyllysine occurs at positions 98 and 137. Residue Lys151 forms a Glycyl lysine isopeptide (Lys-Gly) (interchain with G-Cter in SUMO2) linkage. Residues 181-205 (KEKEEEELMEKPQKETKKDEDPENK) are disordered. At Ser287 the chain carries Phosphoserine. Positions 294 to 303 (RNKKLKKKDK) are enriched in basic residues. The interval 294–402 (RNKKLKKKDK…PMDVDKGPGS (109 aa)) is disordered. Positions 304-313 (GKLEEKKPPE) are enriched in basic and acidic residues. Glycyl lysine isopeptide (Lys-Gly) (interchain with G-Cter in SUMO2) cross-links involve residues Lys310 and Lys331. Residues 332–398 (TPRDKERERY…VDDEPMDVDK (67 aa)) show a composition bias toward basic and acidic residues. Repeat copies occupy residues 342-343 (RE), 344-345 (RE), 346-347 (RD), 348-349 (RE), 350-351 (RD), 352-353 (RD), 354-355 (RE), 356-357 (RD), 358-359 (RE), 360-361 (RD), 362-363 (RE), 364-365 (RE), 366-367 (RE), 368-369 (RD), 370-371 (RE), 372-373 (RE), and 374-375 (RE). The tract at residues 342–375 (RERERDRERDRDRERDRERDRERERERDRERERE) is 17 X 2 AA tandem repeats of R-[ED]. Residues Lys386, Lys388, Lys404, and Lys408 each participate in a glycyl lysine isopeptide (Lys-Gly) (interchain with G-Cter in SUMO2) cross-link. 2 positions are modified to phosphoserine: Ser417 and Ser460. Residue Thr485 is modified to Phosphothreonine. Glycyl lysine isopeptide (Lys-Gly) (interchain with G-Cter in SUMO2) cross-links involve residues Lys496, Lys501, and Lys509. Residue Ser536 is modified to Phosphoserine. Glycyl lysine isopeptide (Lys-Gly) (interchain with G-Cter in SUMO2) cross-links involve residues Lys541, Lys543, Lys544, and Lys553.

It belongs to the RED family. Component of the spliceosome B complex. Interacts with SMU1. Interacts with MAD1L1. May interact with DHX15.

It localises to the nucleus. The protein resides in the nucleoplasm. It is found in the chromosome. The protein localises to the cytoplasm. Its subcellular location is the cytoskeleton. It localises to the spindle pole. In terms of biological role, involved in pre-mRNA splicing as a component of the spliceosome. Auxiliary spliceosomal protein that regulates selection of alternative splice sites in a small set of target pre-mRNA species. Required for normal mitotic cell cycle progression. Recruits MAD1L1 and MAD2L1 to kinetochores, and is required to trigger the spindle assembly checkpoint. Required for normal accumulation of SMU1. The polypeptide is Protein Red (Ik) (Rattus norvegicus (Rat)).